The chain runs to 143 residues: FAD synthase (143 aa).

Residues 11–12, 16–19, and D94 each bind ATP; these read TF and HPGH.

Belongs to the archaeal FAD synthase family. In terms of assembly, homodimer. A divalent metal cation is required as a cofactor.

It catalyses the reaction FMN + ATP + H(+) = FAD + diphosphate. The protein operates within cofactor biosynthesis; FAD biosynthesis; FAD from FMN: step 1/1. Functionally, catalyzes the transfer of the AMP portion of ATP to flavin mononucleotide (FMN) to produce flavin adenine dinucleotide (FAD) coenzyme. This Halomicrobium mukohataei (strain ATCC 700874 / DSM 12286 / JCM 9738 / NCIMB 13541) (Haloarcula mukohataei) protein is FAD synthase.